A 470-amino-acid polypeptide reads, in one-letter code: Protein nucleotidyltransferase YdiU (470 aa).

Residues Gly86, Gly88, Arg89, Lys109, Asp121, Gly122, Arg172, and Arg179 each coordinate ATP. Asp244 acts as the Proton acceptor in catalysis. Positions 245 and 254 each coordinate Mg(2+). ATP is bound at residue Asp254.

Belongs to the SELO family. The cofactor is Mg(2+). Requires Mn(2+) as cofactor.

It catalyses the reaction L-seryl-[protein] + ATP = 3-O-(5'-adenylyl)-L-seryl-[protein] + diphosphate. The catalysed reaction is L-threonyl-[protein] + ATP = 3-O-(5'-adenylyl)-L-threonyl-[protein] + diphosphate. It carries out the reaction L-tyrosyl-[protein] + ATP = O-(5'-adenylyl)-L-tyrosyl-[protein] + diphosphate. The enzyme catalyses L-histidyl-[protein] + UTP = N(tele)-(5'-uridylyl)-L-histidyl-[protein] + diphosphate. It catalyses the reaction L-seryl-[protein] + UTP = O-(5'-uridylyl)-L-seryl-[protein] + diphosphate. The catalysed reaction is L-tyrosyl-[protein] + UTP = O-(5'-uridylyl)-L-tyrosyl-[protein] + diphosphate. In terms of biological role, nucleotidyltransferase involved in the post-translational modification of proteins. It can catalyze the addition of adenosine monophosphate (AMP) or uridine monophosphate (UMP) to a protein, resulting in modifications known as AMPylation and UMPylation. The polypeptide is Protein nucleotidyltransferase YdiU (Roseobacter denitrificans (strain ATCC 33942 / OCh 114) (Erythrobacter sp. (strain OCh 114))).